The sequence spans 192 residues: uncharacterized protein (192 aa).

Helical transmembrane passes span 5 to 22 (VPPL…GIGL), 42 to 61 (FLFL…HYVY), 66 to 88 (LRFL…SGKL), 101 to 118 (WGLL…ALNL), 122 to 139 (LVMW…STIL), and 159 to 181 (ALLL…LWLF).

It localises to the cell membrane. This is an uncharacterized protein from Treponema pallidum (strain Nichols).